Reading from the N-terminus, the 510-residue chain is Sphingolipid C9-methyltransferase B (510 aa).

The N-linked (GlcNAc...) asparagine glycan is linked to asparagine 55. 2 helical membrane passes run 62–82 and 84–104; these read LLGGTLVGLPAFLTWFFGGGA and TFVFFFLLSVLPVLVAFWTYA. Asparagine 175 is a glycosylation site (N-linked (GlcNAc...) asparagine). S-adenosyl-L-methionine-binding positions include 227 to 228, 264 to 272, 290 to 295, and 320 to 321; these read YT, MLDIGCGWG, TIAENQ, and YR. An N-linked (GlcNAc...) asparagine glycan is attached at asparagine 294.

The protein belongs to the CFA/CMAS family.

The protein localises to the membrane. The catalysed reaction is a (4E,8E)-4-sphinga-4,8-dienine ceramide + S-adenosyl-L-methionine = a 9-methyl-(4E,8E)-sphinga-4,8-dienine ceramide + S-adenosyl-L-homocysteine + H(+). It participates in lipid metabolism; sphingolipid metabolism. Catalyzes methylation of the sphingoid base component of glucosylceramides (GluCers) at the C9-position. Sphingolipid C9-methylation requires 4,8-desaturated ceramides as substrates. Glucosylceramides play important roles in growth, differentiation and pathogenicity. The methyl group at the C9-position distinguishes fungal glucosylceramides from those of plants and animals and may thus play a role in host-pathogen interactions enabling the host to recognize the fungal attack and initiate specific defense responses. This is Sphingolipid C9-methyltransferase B from Emericella nidulans (strain FGSC A4 / ATCC 38163 / CBS 112.46 / NRRL 194 / M139) (Aspergillus nidulans).